A 454-amino-acid polypeptide reads, in one-letter code: Glutamyl-tRNA reductase (454 aa).

Residues 49–52, Ser-109, 114–116, and Gln-120 contribute to the substrate site; these read TCNR and ETQ. Cys-50 functions as the Nucleophile in the catalytic mechanism. Residue 189 to 194 coordinates NADP(+); sequence GAGKMS. The disordered stretch occupies residues 434-454; it reads NDKNKQTSSSREQVLVSRFPD.

Belongs to the glutamyl-tRNA reductase family. Homodimer.

It carries out the reaction (S)-4-amino-5-oxopentanoate + tRNA(Glu) + NADP(+) = L-glutamyl-tRNA(Glu) + NADPH + H(+). It functions in the pathway porphyrin-containing compound metabolism; protoporphyrin-IX biosynthesis; 5-aminolevulinate from L-glutamyl-tRNA(Glu): step 1/2. Functionally, catalyzes the NADPH-dependent reduction of glutamyl-tRNA(Glu) to glutamate 1-semialdehyde (GSA). In Brevibacillus brevis (strain 47 / JCM 6285 / NBRC 100599), this protein is Glutamyl-tRNA reductase.